Consider the following 239-residue polypeptide: Hexuronic acid methyltransferase AglP (239 aa).

It belongs to the FkbM methyltransferase family.

The protein localises to the cytoplasm. The protein operates within cell surface structure biogenesis; S-layer biogenesis. Functionally, involved in the assembly of a N-linked pentasaccharide that decorates the S-layer glycoprotein and flagellins. S-adenosyl-L-methionine-dependent methyltransferase that modifies the hexuronic acid found at position 4 of the pentasaccharide. The protein is Hexuronic acid methyltransferase AglP (aglP) of Haloferax volcanii (strain ATCC 29605 / DSM 3757 / JCM 8879 / NBRC 14742 / NCIMB 2012 / VKM B-1768 / DS2) (Halobacterium volcanii).